Here is a 100-residue protein sequence, read N- to C-terminus: Small ribosomal subunit protein uS17 (100 aa).

It belongs to the universal ribosomal protein uS17 family. As to quaternary structure, part of the 30S ribosomal subunit.

Functionally, one of the primary rRNA binding proteins, it binds specifically to the 5'-end of 16S ribosomal RNA. This chain is Small ribosomal subunit protein uS17, found in Erythrobacter litoralis (strain HTCC2594).